A 283-amino-acid polypeptide reads, in one-letter code: MAEITASLVKELRERTGAGMMDCKKALTEANGDIELAIENMRKSGAIKAAKKAGNVAADGVIKTKIDGNYGIILEVNCQTDFVAKDAGFQAFADKVLDAAVAGKITDVEVLKAQFEEERVALVAKIGENINIRRVAALEGDVLGSYQHGARIGVLVAAKGADEELVKHIAMHVAASKPEFIKPEDVSAEVVEKEYQVQLDIAMQSGKPKEIAEKMVEGRMKKFTGEVSLTGQPFVMEPSKTVGQLLKEHNAEVTGFIRFEVGEGIEKVETDFAAEVAAMSKQS.

The interval 80-83 is involved in Mg(2+) ion dislocation from EF-Tu; it reads TDFV.

The protein belongs to the EF-Ts family.

The protein resides in the cytoplasm. In terms of biological role, associates with the EF-Tu.GDP complex and induces the exchange of GDP to GTP. It remains bound to the aminoacyl-tRNA.EF-Tu.GTP complex up to the GTP hydrolysis stage on the ribosome. The protein is Elongation factor Ts of Shigella boydii serotype 18 (strain CDC 3083-94 / BS512).